We begin with the raw amino-acid sequence, 345 residues long: N-malonyltransferase FDB2 (345 aa).

Residue Cys110 is the Acyl-thioester intermediate of the active site. His158 functions as the Proton acceptor in the catalytic mechanism. The active site involves Asp173.

It belongs to the arylamine N-acetyltransferase family.

It functions in the pathway xenobiotic degradation. Its function is as follows. N-malonyltransferase; part of the Fusarium detoxification of benzoxazolinone cluster 2 (FDB2) involved in the degradation of benzoxazolinones produced by the host plant. Maize, wheat, and rye produce the 2 benzoxazinone phytoanticipins 2,4-dihy-droxy-7-methoxy-1,4-benzoxazin-3-one (DIMBOA) and 2,4-dihydroxy-1,4-benzoxazin-3-one (DIBOA) that, due to their inherent instability once released, spontaneously degrade to the more stable corresponding benzoxazolinones, 6-methoxy-2-benzoxazolinone (MBOA) and 2-benzoxazolinone (BOA), respectively. The first step in the detoxification of benzoxazolinones involves the hydrolysis of the cyclic ester bond of benzoxazolinones by the FDB1 cluster gamma-lactamase MBL1 to aminophenols. MBL1 is able to convert BOA into 2-aminophenol (2-AP), as well as MBOA into 5-methoxy-2-aminophenol (2-AMP). The FDB2 cluster N-malonyltransferase FDB2/NAT1 then metabolizes aminophenols via N-malonylation to non-toxic malonamic acids. FDB2/NAT1 converts 2-AP into N-(2-hydroxyphenyl) malonamic acid (HPMA) and 2-AMP into N-(2-hydroxy-4-methoxyphenyl) malonamic acid (HMPMA). The duplicated dienlactone hydrolases DLH1 and DLH2 may provide redundant function for hydrolyzing the lactone moiety in the BOA molecule. The roles of the amidases an other enzymes encoded by the 2 FDB clusters have not been identified so far. This is N-malonyltransferase FDB2 from Gibberella moniliformis (strain M3125 / FGSC 7600) (Maize ear and stalk rot fungus).